The chain runs to 454 residues: UPF0210 protein Ppro_0613 (454 aa).

The protein belongs to the UPF0210 family. Homodimer.

This chain is UPF0210 protein Ppro_0613, found in Pelobacter propionicus (strain DSM 2379 / NBRC 103807 / OttBd1).